Consider the following 457-residue polypeptide: D-hydantoinase (457 aa).

Residues histidine 57 and histidine 59 each contribute to the Zn(2+) site. Position 69 is a phosphoserine (serine 69). Lysine 148 is a Zn(2+) binding site. An N6-carboxylysine modification is found at lysine 148. Tyrosine 153 is a binding site for substrate. Zn(2+) contacts are provided by histidine 181 and histidine 237. Threonine 286 is a binding site for substrate. Aspartate 313 is a binding site for Zn(2+). Asparagine 335 is a substrate binding site.

This sequence belongs to the metallo-dependent hydrolases superfamily. Hydantoinase/dihydropyrimidinase family. As to quaternary structure, homodimer and homotetramer. The cofactor is Zn(2+). In terms of processing, carboxylation allows a single lysine to coordinate two zinc ions.

Catalyzes the stereospecific hydrolysis of the cyclic amide bond of D-hydantoin derivatives. The polypeptide is D-hydantoinase (hyuA) (Ralstonia pickettii (Burkholderia pickettii)).